A 226-amino-acid polypeptide reads, in one-letter code: MHLLIAAAGSGRRMGADRNKLLLPLLGRPLIAWTVDAALTATEISWIGIVGQDIDRAEILDALGSVKKPLVWIQGGATRQESVLRGLAGLPEGARHVLIHDGARCLVQPDLFDRCAVAVEAGAALIAATPVTDTIKRVDEHGMIRDTPDRAELWAAQTPQGFEVEQLRQGHVRAQAEGWSVTDDASLFERLGWSVQVLDAGPSNIKVTTPFDLTVAEAVLSSRTTP.

This sequence belongs to the IspD/TarI cytidylyltransferase family. IspD subfamily.

It catalyses the reaction 2-C-methyl-D-erythritol 4-phosphate + CTP + H(+) = 4-CDP-2-C-methyl-D-erythritol + diphosphate. It functions in the pathway isoprenoid biosynthesis; isopentenyl diphosphate biosynthesis via DXP pathway; isopentenyl diphosphate from 1-deoxy-D-xylulose 5-phosphate: step 2/6. Functionally, catalyzes the formation of 4-diphosphocytidyl-2-C-methyl-D-erythritol from CTP and 2-C-methyl-D-erythritol 4-phosphate (MEP). The protein is 2-C-methyl-D-erythritol 4-phosphate cytidylyltransferase of Synechococcus sp. (strain CC9902).